Consider the following 348-residue polypeptide: MTAQPQVLKIRRPDDWHIHLRDGDMLKTVVPYTSELYGRAIVMPNLAPPVTTVDAAIAYRQRILDAVPTDHDFTPLMTCYLTDSLDPNEVECGFNEGVFTAAKLYPANATTNSSHGVTSIDAIMPVLERMEKLGMPLLVHGEVTHAEIDIFDREARFIETVMEPLRQRLQGLKVVFEHITTKDAAEYVRDGNELLAATITPQHLMFNRNHMLVGGVRPHLYCLPILKRNIHQQALRELVASGFTRAFLGTDSAPHARHRKEASCGCAGCFNAPTALASYATVFDEMGALEHFEAFASINGPRFYGLPLNETFIELERKESQVEESIALTDDTLIPFLAGEIVHWTVKR.

Zn(2+) is bound by residues H17 and H19. Residues 19–21 (HLR) and N45 each bind substrate. K103, H140, and H178 together coordinate Zn(2+). K103 carries the post-translational modification N6-carboxylysine. H140 lines the substrate pocket. Residue L223 coordinates substrate. Zn(2+) is bound at residue D251. Residue D251 is part of the active site. Substrate contacts are provided by H255 and A267.

Belongs to the metallo-dependent hydrolases superfamily. DHOase family. Class II DHOase subfamily. Homodimer. Zn(2+) serves as cofactor.

It catalyses the reaction (S)-dihydroorotate + H2O = N-carbamoyl-L-aspartate + H(+). The protein operates within pyrimidine metabolism; UMP biosynthesis via de novo pathway; (S)-dihydroorotate from bicarbonate: step 3/3. Its function is as follows. Catalyzes the reversible cyclization of carbamoyl aspartate to dihydroorotate. In Enterobacter sp. (strain 638), this protein is Dihydroorotase.